A 293-amino-acid chain; its full sequence is Glycine--tRNA ligase alpha subunit (293 aa).

It belongs to the class-II aminoacyl-tRNA synthetase family. In terms of assembly, tetramer of two alpha and two beta subunits.

The protein localises to the cytoplasm. The enzyme catalyses tRNA(Gly) + glycine + ATP = glycyl-tRNA(Gly) + AMP + diphosphate. The sequence is that of Glycine--tRNA ligase alpha subunit from Aliarcobacter butzleri (strain RM4018) (Arcobacter butzleri).